A 567-amino-acid chain; its full sequence is Urease subunit alpha (567 aa).

Residues 129 to 567 (GGVDSHIHFI…LPLAQRYFLF (439 aa)) form the Urease domain. 3 residues coordinate Ni(2+): histidine 134, histidine 136, and lysine 217. At lysine 217 the chain carries N6-carboxylysine. Histidine 219 is a binding site for substrate. Ni(2+) is bound by residues histidine 246 and histidine 272. Histidine 320 acts as the Proton donor in catalysis. Aspartate 360 is a Ni(2+) binding site.

This sequence belongs to the metallo-dependent hydrolases superfamily. Urease alpha subunit family. Heterotrimer of UreA (gamma), UreB (beta) and UreC (alpha) subunits. Three heterotrimers associate to form the active enzyme. Requires Ni cation as cofactor. Carboxylation allows a single lysine to coordinate two nickel ions.

Its subcellular location is the cytoplasm. It carries out the reaction urea + 2 H2O + H(+) = hydrogencarbonate + 2 NH4(+). It participates in nitrogen metabolism; urea degradation; CO(2) and NH(3) from urea (urease route): step 1/1. The chain is Urease subunit alpha from Pseudomonas putida (strain ATCC 700007 / DSM 6899 / JCM 31910 / BCRC 17059 / LMG 24140 / F1).